We begin with the raw amino-acid sequence, 546 residues long: NAD(P)H-quinone oxidoreductase chain 4 (546 aa).

The next 14 membrane-spanning stretches (helical) occupy residues 24–44 (FPWLSVSILFPIGCAFLIPFF), 56–76 (FALSVALITFLVTVGSYINGF), 108–128 (MPLILLTSFITALAVLAAWPV), 132–152 (PKLFFFLILIMDGGQIAVFAV), 156–176 (LLFFLSWELELLPVYLLLAIW), 188–208 (FIIYTAGSSIFILLAALAMGF), 232–252 (ILCYIGLLIAFGVKLPIVPLH), 263–283 (TAPVHMLLAGILLKMGGYALL), 297–317 (FSPLLIVLGVVNIIYAALTSF), 326–346 (IAYSSISHMGFVLIGIGSFSS), 352–372 (AMLQMVSHGLIGASLFFLVGA), 396–416 (FALWTACSLASLALPGMSGFV), 437–457 (VIMASLAAIGVILTPIYLLSM), and 484–504 (IYIIACLLLPIIGIGLYPRLV).

The protein belongs to the complex I subunit 4 family.

It is found in the cellular thylakoid membrane. It catalyses the reaction a plastoquinone + NADH + (n+1) H(+)(in) = a plastoquinol + NAD(+) + n H(+)(out). The catalysed reaction is a plastoquinone + NADPH + (n+1) H(+)(in) = a plastoquinol + NADP(+) + n H(+)(out). Functionally, NDH-1 shuttles electrons from NAD(P)H, via FMN and iron-sulfur (Fe-S) centers, to quinones in the respiratory chain. The immediate electron acceptor for the enzyme in this species is believed to be plastoquinone. Couples the redox reaction to proton translocation (for every two electrons transferred, four hydrogen ions are translocated across the cytoplasmic membrane), and thus conserves the redox energy in a proton gradient. The sequence is that of NAD(P)H-quinone oxidoreductase chain 4 from Prochlorococcus marinus subsp. pastoris (strain CCMP1986 / NIES-2087 / MED4).